We begin with the raw amino-acid sequence, 519 residues long: MIOREX complex component 12 (519 aa).

Residues 1–35 (MLRSLHSAATLSNKRFYSLISHSNRKNIIKKLLRH) constitute a mitochondrion transit peptide.

Associates with the mitochondrial ribosome.

Its subcellular location is the mitochondrion. Component of MIOREX complexes, large expressome-like assemblies of ribosomes with factors involved in all the steps of post-transcriptional gene expression. The protein is MIOREX complex component 12 of Saccharomyces cerevisiae (strain ATCC 204508 / S288c) (Baker's yeast).